The sequence spans 325 residues: MLDWLKVNLQYVTPKHLLSRLVGKLAEAEMGSVTTFFIKLFIKQYNVDMTEALHEKPEHYRSFNKFFTRTLKPEARTIDESDDVLIHAVDGTVSQFGDIRSDSIFQAKGHDFSLTTLLGGKPDVAAPFKNGKFATVYLAPRDYHRIHMPIEGTLTDMLYVPGELFSVNPLTAQNIPGLFARNERVVALFDTPVGKMAMVLVGATIVASIETVWAGTVTPPTGKTVQHWSYETDSEAAVKLEKGAELGRFKLGSTIVVCFEKDMIDFEDIAPGMVTRLGEPMASKMSSQKAITPEQTTETPVQASNEFDDNAGETKKDTPSEGADS.

Active-site charge relay system; for autoendoproteolytic cleavage activity residues include aspartate 90, histidine 147, and serine 253. Serine 253 (schiff-base intermediate with substrate; via pyruvic acid; for decarboxylase activity) is an active-site residue. Serine 253 carries the pyruvic acid (Ser); by autocatalysis modification. Positions 281–325 (MASKMSSQKAITPEQTTETPVQASNEFDDNAGETKKDTPSEGADS) are disordered. Over residues 284–305 (KMSSQKAITPEQTTETPVQASN) the composition is skewed to polar residues.

The protein belongs to the phosphatidylserine decarboxylase family. PSD-B subfamily. Prokaryotic type I sub-subfamily. In terms of assembly, heterodimer of a large membrane-associated beta subunit and a small pyruvoyl-containing alpha subunit. The cofactor is pyruvate. Post-translationally, is synthesized initially as an inactive proenzyme. Formation of the active enzyme involves a self-maturation process in which the active site pyruvoyl group is generated from an internal serine residue via an autocatalytic post-translational modification. Two non-identical subunits are generated from the proenzyme in this reaction, and the pyruvate is formed at the N-terminus of the alpha chain, which is derived from the carboxyl end of the proenzyme. The autoendoproteolytic cleavage occurs by a canonical serine protease mechanism, in which the side chain hydroxyl group of the serine supplies its oxygen atom to form the C-terminus of the beta chain, while the remainder of the serine residue undergoes an oxidative deamination to produce ammonia and the pyruvoyl prosthetic group on the alpha chain. During this reaction, the Ser that is part of the protease active site of the proenzyme becomes the pyruvoyl prosthetic group, which constitutes an essential element of the active site of the mature decarboxylase.

Its subcellular location is the cell membrane. The catalysed reaction is a 1,2-diacyl-sn-glycero-3-phospho-L-serine + H(+) = a 1,2-diacyl-sn-glycero-3-phosphoethanolamine + CO2. Its pathway is phospholipid metabolism; phosphatidylethanolamine biosynthesis; phosphatidylethanolamine from CDP-diacylglycerol: step 2/2. In terms of biological role, catalyzes the formation of phosphatidylethanolamine (PtdEtn) from phosphatidylserine (PtdSer). This is Phosphatidylserine decarboxylase proenzyme from Alteromonas mediterranea (strain DSM 17117 / CIP 110805 / LMG 28347 / Deep ecotype).